A 277-amino-acid polypeptide reads, in one-letter code: Energy-coupling factor transporter ATP-binding protein EcfA1 (277 aa).

Residues 4–238 (IETQDLCHTY…PDLLSSVRLD (235 aa)) form the ABC transporter domain. 37–44 (GPNGAGKS) contributes to the ATP binding site.

Belongs to the ABC transporter superfamily. Energy-coupling factor EcfA family. As to quaternary structure, forms a stable energy-coupling factor (ECF) transporter complex composed of 2 membrane-embedded substrate-binding proteins (S component), 2 ATP-binding proteins (A component) and 2 transmembrane proteins (T component).

It localises to the cell membrane. Functionally, ATP-binding (A) component of a common energy-coupling factor (ECF) ABC-transporter complex. Unlike classic ABC transporters this ECF transporter provides the energy necessary to transport a number of different substrates. The polypeptide is Energy-coupling factor transporter ATP-binding protein EcfA1 (Methanospirillum hungatei JF-1 (strain ATCC 27890 / DSM 864 / NBRC 100397 / JF-1)).